The chain runs to 721 residues: Polyribonucleotide nucleotidyltransferase (721 aa).

2 residues coordinate Mg(2+): aspartate 495 and aspartate 501. Residues 562–621 enclose the KH domain; it reads PRLLSFRIDPELIGTVIGPGGRTIKGITERTNTKIDIEDGGIVTIASHDGAAAEEAQKII. In terms of domain architecture, S1 motif spans 631 to 699; it reads GEVFSGSITR…NRGRINLTLR (69 aa).

Belongs to the polyribonucleotide nucleotidyltransferase family. Mg(2+) is required as a cofactor.

It is found in the cytoplasm. It carries out the reaction RNA(n+1) + phosphate = RNA(n) + a ribonucleoside 5'-diphosphate. Functionally, involved in mRNA degradation. Catalyzes the phosphorolysis of single-stranded polyribonucleotides processively in the 3'- to 5'-direction. This is Polyribonucleotide nucleotidyltransferase from Synechococcus sp. (strain CC9605).